The sequence spans 485 residues: Adenosylhomocysteinase (485 aa).

Thr-60, Asp-146, and Glu-208 together coordinate substrate. Residue Thr-209–Thr-211 coordinates NAD(+). Substrate-binding residues include Lys-238 and Asp-242. NAD(+)-binding positions include Asn-243, Gly-272–Gly-277, Glu-295, Asn-330, Ile-351–His-353, and Asn-399.

Belongs to the adenosylhomocysteinase family. Requires NAD(+) as cofactor.

It localises to the cytoplasm. It carries out the reaction S-adenosyl-L-homocysteine + H2O = L-homocysteine + adenosine. The protein operates within amino-acid biosynthesis; L-homocysteine biosynthesis; L-homocysteine from S-adenosyl-L-homocysteine: step 1/1. May play a key role in the regulation of the intracellular concentration of adenosylhomocysteine. This chain is Adenosylhomocysteinase, found in Streptomyces griseus subsp. griseus (strain JCM 4626 / CBS 651.72 / NBRC 13350 / KCC S-0626 / ISP 5235).